The sequence spans 122 residues: Large ribosomal subunit protein uL14c (122 aa).

The protein belongs to the universal ribosomal protein uL14 family. In terms of assembly, part of the 50S ribosomal subunit.

It localises to the plastid. The protein resides in the chloroplast. Functionally, binds to 23S rRNA. The sequence is that of Large ribosomal subunit protein uL14c from Liriodendron tulipifera (Tuliptree).